Reading from the N-terminus, the 157-residue chain is 2-C-methyl-D-erythritol 2,4-cyclodiphosphate synthase (157 aa).

Asp-8 and His-10 together coordinate a divalent metal cation. Residues 8–10 (DVH) and 34–35 (HS) each bind 4-CDP-2-C-methyl-D-erythritol 2-phosphate. Residue His-42 coordinates a divalent metal cation. 4-CDP-2-C-methyl-D-erythritol 2-phosphate is bound by residues 56–58 (DIG), 61–65 (FPDTD), 132–135 (TTTE), Phe-139, and Arg-142.

It belongs to the IspF family. Homotrimer. The cofactor is a divalent metal cation.

The catalysed reaction is 4-CDP-2-C-methyl-D-erythritol 2-phosphate = 2-C-methyl-D-erythritol 2,4-cyclic diphosphate + CMP. The protein operates within isoprenoid biosynthesis; isopentenyl diphosphate biosynthesis via DXP pathway; isopentenyl diphosphate from 1-deoxy-D-xylulose 5-phosphate: step 4/6. In terms of biological role, involved in the biosynthesis of isopentenyl diphosphate (IPP) and dimethylallyl diphosphate (DMAPP), two major building blocks of isoprenoid compounds. Catalyzes the conversion of 4-diphosphocytidyl-2-C-methyl-D-erythritol 2-phosphate (CDP-ME2P) to 2-C-methyl-D-erythritol 2,4-cyclodiphosphate (ME-CPP) with a corresponding release of cytidine 5-monophosphate (CMP). This is 2-C-methyl-D-erythritol 2,4-cyclodiphosphate synthase from Geobacter metallireducens (strain ATCC 53774 / DSM 7210 / GS-15).